The chain runs to 288 residues: Energy-coupling factor transporter ATP-binding protein EcfA2 (288 aa).

In terms of domain architecture, ABC transporter spans 3–246 (IKLEQLGYCY…PDELVDLGLS (244 aa)). Residue 40–47 (GHTGSGKS) participates in ATP binding.

It belongs to the ABC transporter superfamily. Energy-coupling factor EcfA family. Forms a stable energy-coupling factor (ECF) transporter complex composed of 2 membrane-embedded substrate-binding proteins (S component), 2 ATP-binding proteins (A component) and 2 transmembrane proteins (T component).

It localises to the cell membrane. Its function is as follows. ATP-binding (A) component of a common energy-coupling factor (ECF) ABC-transporter complex. Unlike classic ABC transporters this ECF transporter provides the energy necessary to transport a number of different substrates. This chain is Energy-coupling factor transporter ATP-binding protein EcfA2, found in Listeria innocua serovar 6a (strain ATCC BAA-680 / CLIP 11262).